Reading from the N-terminus, the 311-residue chain is Methionyl-tRNA formyltransferase (311 aa).

Residue S109 to P112 participates in (6S)-5,6,7,8-tetrahydrofolate binding.

The protein belongs to the Fmt family.

The catalysed reaction is L-methionyl-tRNA(fMet) + (6R)-10-formyltetrahydrofolate = N-formyl-L-methionyl-tRNA(fMet) + (6S)-5,6,7,8-tetrahydrofolate + H(+). Its function is as follows. Attaches a formyl group to the free amino group of methionyl-tRNA(fMet). The formyl group appears to play a dual role in the initiator identity of N-formylmethionyl-tRNA by promoting its recognition by IF2 and preventing the misappropriation of this tRNA by the elongation apparatus. In Moorella thermoacetica (strain ATCC 39073 / JCM 9320), this protein is Methionyl-tRNA formyltransferase.